Here is a 181-residue protein sequence, read N- to C-terminus: MRILGIDPGLRTTGFGVLERHGHKLVYVASGTIKSNGNADLPSRLKTLYDGVSELVSTYRPDCASIEKVFVNVNPQSTLLLGQARGAVICGLMSGNLPVFEYTALQLKQAVVGYGRANKDQVQEMVVRLLNLEGKPGADASDALGVAICHAHGGETLAAMAGLAPQLAQKGLRVRRGRLVG.

Catalysis depends on residues aspartate 7, glutamate 67, and aspartate 139. The Mg(2+) site is built by aspartate 7, glutamate 67, and aspartate 139.

It belongs to the RuvC family. In terms of assembly, homodimer which binds Holliday junction (HJ) DNA. The HJ becomes 2-fold symmetrical on binding to RuvC with unstacked arms; it has a different conformation from HJ DNA in complex with RuvA. In the full resolvosome a probable DNA-RuvA(4)-RuvB(12)-RuvC(2) complex forms which resolves the HJ. The cofactor is Mg(2+).

The protein resides in the cytoplasm. It catalyses the reaction Endonucleolytic cleavage at a junction such as a reciprocal single-stranded crossover between two homologous DNA duplexes (Holliday junction).. In terms of biological role, the RuvA-RuvB-RuvC complex processes Holliday junction (HJ) DNA during genetic recombination and DNA repair. Endonuclease that resolves HJ intermediates. Cleaves cruciform DNA by making single-stranded nicks across the HJ at symmetrical positions within the homologous arms, yielding a 5'-phosphate and a 3'-hydroxyl group; requires a central core of homology in the junction. The consensus cleavage sequence is 5'-(A/T)TT(C/G)-3'. Cleavage occurs on the 3'-side of the TT dinucleotide at the point of strand exchange. HJ branch migration catalyzed by RuvA-RuvB allows RuvC to scan DNA until it finds its consensus sequence, where it cleaves and resolves the cruciform DNA. In Ralstonia pickettii (strain 12J), this protein is Crossover junction endodeoxyribonuclease RuvC.